Here is a 329-residue protein sequence, read N- to C-terminus: Gamma-resorcylate decarboxylase (329 aa).

Zn(2+) contacts are provided by Glu8, His10, His167, and Asp290. The active site involves Asp290.

This sequence belongs to the metallo-dependent hydrolases superfamily. ACMSD family. Zn(2+) serves as cofactor.

It carries out the reaction 2,6-dihydroxybenzoate + H(+) = resorcinol + CO2. The protein operates within aromatic compound metabolism. Functionally, involved in the gamma-resorcylate (2,6-dihydroxybenzoate) catabolism. Catalyzes the reversible decarboxylation of gamma-resorcylate to resorcinol. The polypeptide is Gamma-resorcylate decarboxylase (Rhodococcus jostii (strain RHA1)).